Consider the following 81-residue polypeptide: ATP synthase subunit c, chloroplastic (81 aa).

The next 2 helical transmembrane spans lie at 3–23 (PLIA…ASIG) and 57–77 (LAFM…LLFA).

This sequence belongs to the ATPase C chain family. As to quaternary structure, F-type ATPases have 2 components, F(1) - the catalytic core - and F(0) - the membrane proton channel. F(1) has five subunits: alpha(3), beta(3), gamma(1), delta(1), epsilon(1). F(0) has four main subunits: a(1), b(1), b'(1) and c(10-14). The alpha and beta chains form an alternating ring which encloses part of the gamma chain. F(1) is attached to F(0) by a central stalk formed by the gamma and epsilon chains, while a peripheral stalk is formed by the delta, b and b' chains.

Its subcellular location is the plastid. It localises to the chloroplast thylakoid membrane. Its function is as follows. F(1)F(0) ATP synthase produces ATP from ADP in the presence of a proton or sodium gradient. F-type ATPases consist of two structural domains, F(1) containing the extramembraneous catalytic core and F(0) containing the membrane proton channel, linked together by a central stalk and a peripheral stalk. During catalysis, ATP synthesis in the catalytic domain of F(1) is coupled via a rotary mechanism of the central stalk subunits to proton translocation. In terms of biological role, key component of the F(0) channel; it plays a direct role in translocation across the membrane. A homomeric c-ring of between 10-14 subunits forms the central stalk rotor element with the F(1) delta and epsilon subunits. This chain is ATP synthase subunit c, chloroplastic, found in Pisum sativum (Garden pea).